A 196-amino-acid chain; its full sequence is SPRY domain-containing protein 7 (196 aa).

A2 is subject to N-acetylalanine. Positions 2 to 184 (AASAWCCLRC…FSEFYHTPPP (183 aa)) constitute a B30.2/SPRY domain.

This is SPRY domain-containing protein 7 (Spryd7) from Mus musculus (Mouse).